The following is a 346-amino-acid chain: Cell shape-determining protein MreC (346 aa).

Positions 89–118 form a coiled coil; the sequence is NRRLKAELAEMRQWRDRALALQDQNDRFKS. The interval 292 to 346 is disordered; it reads SLPPVTTEDPQTSILSNPVSRPVAPTPSPATATPSAAPAARPATTATPPQTGAPR. Positions 299 to 308 are enriched in polar residues; that stretch reads EDPQTSILSN. Low complexity predominate over residues 309-340; it reads PVSRPVAPTPSPATATPSAAPAARPATTATPP.

Belongs to the MreC family. As to quaternary structure, interacts with penicillin-binding proteins (PBP2, PBP1a, PBP1b, PBP2a and PBP2b). Interacts with outer membrane proteins belonging to the TonB-dependent receptor family of transport proteins.

The protein resides in the periplasm. Its function is as follows. Involved in formation and maintenance of cell shape. Required for the spatial organization of components of the peptidoglycan-synthesizing holoenzyme in the periplasm and peptidoglycan synthetic activity. This Caulobacter vibrioides (strain NA1000 / CB15N) (Caulobacter crescentus) protein is Cell shape-determining protein MreC.